We begin with the raw amino-acid sequence, 202 residues long: N-(5'-phosphoribosyl)anthranilate isomerase (202 aa).

Belongs to the TrpF family.

It catalyses the reaction N-(5-phospho-beta-D-ribosyl)anthranilate = 1-(2-carboxyphenylamino)-1-deoxy-D-ribulose 5-phosphate. It functions in the pathway amino-acid biosynthesis; L-tryptophan biosynthesis; L-tryptophan from chorismate: step 3/5. In Listeria monocytogenes serotype 4b (strain CLIP80459), this protein is N-(5'-phosphoribosyl)anthranilate isomerase.